The following is a 511-amino-acid chain: MHLPSLSLAWALAGSSLALPQAEQPVLQDDRASSRAAAVKEAFSHAWDGYKKYAFPHDELHPISNGYGNSRNGWGASAVDALSTAIVMRNATIVHEILDHIATIDYSKTSDTVSLFETTIRYLGGMLSGYDLLKGPAADLVKDTSKVDILLKQSKNLGDILKFAFDTPSGVPYNNINITSHGHDGAKTNGLAVTGTLVLEWTRLSDLTGDPEYAQLSQKAESYLLHPQPSSAEPFPGLIGSNIDIKTGQFTDGHVSWNGGDDSYYEYLIKMYVYDPTRFALYRDRWVAAAESSIEHLASHPASRPDLTFLATYDGGRYGLSSQHLACFDGGNFLLGGTVLDRRDLIDFGLALVDACHETYSQTLTGIGPESFGWDANSVPADQKELYERAGFYVQNGAYILRPEVIESFYYAWRVTGRSEYRDWVWTAFVAINKTCRTGSGYAGLTNVNAENGGGRYDNQESFLFAEVLKYAYLTHSEELMAAEDAWQVQRGDGNQFVFNTEAHPIRVHHS.

A signal peptide spans 1–18 (MHLPSLSLAWALAGSSLA). 2 N-linked (GlcNAc...) asparagine glycosylation sites follow: asparagine 90 and asparagine 177. Residues cysteine 327 and cysteine 356 are joined by a disulfide bond. Residue glutamate 370 is the Proton donor of the active site. The N-linked (GlcNAc...) asparagine glycan is linked to asparagine 433. Threonine 501 is a Ca(2+) binding site.

The protein belongs to the glycosyl hydrolase 47 family. Monomer. The cofactor is Ca(2+). Mg(2+) is required as a cofactor.

The protein localises to the cytoplasmic vesicle lumen. It carries out the reaction N(4)-(alpha-D-Man-(1-&gt;2)-alpha-D-Man-(1-&gt;2)-alpha-D-Man-(1-&gt;3)-[alpha-D-Man-(1-&gt;2)-alpha-D-Man-(1-&gt;3)-[alpha-D-Man-(1-&gt;2)-alpha-D-Man-(1-&gt;6)]-alpha-D-Man-(1-&gt;6)]-beta-D-Man-(1-&gt;4)-beta-D-GlcNAc-(1-&gt;4)-beta-D-GlcNAc)-L-asparaginyl-[protein] (N-glucan mannose isomer 9A1,2,3B1,2,3) + 4 H2O = N(4)-(alpha-D-Man-(1-&gt;3)-[alpha-D-Man-(1-&gt;3)-[alpha-D-Man-(1-&gt;6)]-alpha-D-Man-(1-&gt;6)]-beta-D-Man-(1-&gt;4)-beta-D-GlcNAc-(1-&gt;4)-beta-D-GlcNAc)-L-asparaginyl-[protein] (N-glucan mannose isomer 5A1,2) + 4 beta-D-mannose. The catalysed reaction is N(4)-(alpha-D-Man-(1-&gt;2)-alpha-D-Man-(1-&gt;2)-alpha-D-Man-(1-&gt;3)-[alpha-D-Man-(1-&gt;3)-[alpha-D-Man-(1-&gt;2)-alpha-D-Man-(1-&gt;6)]-alpha-D-Man-(1-&gt;6)]-beta-D-Man-(1-&gt;4)-beta-D-GlcNAc-(1-&gt;4)-beta-D-GlcNAc)-L-asparaginyl-[protein] (N-glucan mannose isomer 8A1,2,3B1,3) + 3 H2O = N(4)-(alpha-D-Man-(1-&gt;3)-[alpha-D-Man-(1-&gt;3)-[alpha-D-Man-(1-&gt;6)]-alpha-D-Man-(1-&gt;6)]-beta-D-Man-(1-&gt;4)-beta-D-GlcNAc-(1-&gt;4)-beta-D-GlcNAc)-L-asparaginyl-[protein] (N-glucan mannose isomer 5A1,2) + 3 beta-D-mannose. Its pathway is protein modification; protein glycosylation. Functionally, involved in the maturation of Asn-linked oligosaccharides. Progressively trims alpha-1,2-linked mannose residues from Man(9)GlcNAc(2) to produce Man(5)GlcNAc(2). The polypeptide is Probable mannosyl-oligosaccharide alpha-1,2-mannosidase 1B (mns1B) (Aspergillus clavatus (strain ATCC 1007 / CBS 513.65 / DSM 816 / NCTC 3887 / NRRL 1 / QM 1276 / 107)).